The following is a 921-amino-acid chain: Isoleucine--tRNA ligase (921 aa).

A 'HIGH' region motif is present at residues 57–67; it reads PYANGDIHMGH. Glu-552 is an L-isoleucyl-5'-AMP binding site. Residues 593–597 carry the 'KMSKS' region motif; the sequence is KMSKS. Lys-596 contacts ATP. 4 residues coordinate Zn(2+): Cys-888, Cys-891, Cys-908, and Cys-911.

This sequence belongs to the class-I aminoacyl-tRNA synthetase family. IleS type 1 subfamily. As to quaternary structure, monomer. Requires Zn(2+) as cofactor.

It is found in the cytoplasm. It catalyses the reaction tRNA(Ile) + L-isoleucine + ATP = L-isoleucyl-tRNA(Ile) + AMP + diphosphate. Its function is as follows. Catalyzes the attachment of isoleucine to tRNA(Ile). As IleRS can inadvertently accommodate and process structurally similar amino acids such as valine, to avoid such errors it has two additional distinct tRNA(Ile)-dependent editing activities. One activity is designated as 'pretransfer' editing and involves the hydrolysis of activated Val-AMP. The other activity is designated 'posttransfer' editing and involves deacylation of mischarged Val-tRNA(Ile). The sequence is that of Isoleucine--tRNA ligase from Bacillus cereus (strain AH187).